The chain runs to 590 residues: Beta-fructofuranosidase, cell wall isozyme (590 aa).

The N-terminal stretch at 1–28 (MGTRPRGVVLAPWAVVLVLVLALRLAGA) is a signal peptide. Asp68 is a catalytic residue. N-linked (GlcNAc...) asparagine glycans are attached at residues Asn190 and Asn341.

Belongs to the glycosyl hydrolase 32 family.

Its subcellular location is the secreted. The protein resides in the cell wall. The catalysed reaction is Hydrolysis of terminal non-reducing beta-D-fructofuranoside residues in beta-D-fructofuranosides.. This is Beta-fructofuranosidase, cell wall isozyme from Zea mays (Maize).